The primary structure comprises 400 residues: Succinate--glutarate CoA-transferase (400 aa).

The Nucleophile role is filled by D181.

It belongs to the CoA-transferase III family.

It carries out the reaction glutarate + succinyl-CoA = glutaryl-CoA + succinate. It participates in amino-acid degradation. The protein operates within cofactor biosynthesis; biotin biosynthesis. Is involved in L-lysine degradation and provides glutaryl-CoA for biotin synthesis. Catalyzes the conversion of glutarate to glutaryl-CoA via the transfer of CoA from succinyl-CoA. The sequence is that of Succinate--glutarate CoA-transferase from Agrobacterium fabrum (strain C58 / ATCC 33970) (Agrobacterium tumefaciens (strain C58)).